The chain runs to 394 residues: Protein NDRG1 (394 aa).

Ser2 is subject to N-acetylserine. 3 positions are modified to phosphoserine: Ser2, Ser319, and Ser326. The interval 325-394 (RSRTASGSSV…AGPKSMEVSC (70 aa)) is disordered. Positions 327–339 (RTASGSSVTSLEG) are enriched in polar residues. The residue at position 328 (Thr328) is a Phosphothreonine. Phosphoserine; by SGK1 is present on Ser330. Phosphoserine is present on residues Ser332 and Ser333. Phosphothreonine is present on Thr335. Ser336 bears the Phosphoserine mark. 3 consecutive repeat copies span residues 339-348 (GTRSRSHTSE), 349-358 (GPRSRSHTSE), and 359-368 (GSRSRSHTSE). Positions 339 to 368 (GTRSRSHTSEGPRSRSHTSEGSRSRSHTSE) are 3 X 10 AA tandem repeats of G-[PST]-R-S-R-S-H-T-S-E. At Thr340 the chain carries Phosphothreonine. Residue Ser342 is modified to Phosphoserine. Basic and acidic residues predominate over residues 345–371 (HTSEGPRSRSHTSEGSRSRSHTSEDAR). Phosphothreonine; by SGK1 is present on Thr346. A Phosphoserine modification is found at Ser352. The residue at position 356 (Thr356) is a Phosphothreonine; by SGK1. A phosphoserine mark is found at Ser362 and Ser364. Thr366 bears the Phosphothreonine; by SGK1 mark. The span at 374-386 (ITPNSGATGNNAG) shows a compositional bias: polar residues. Thr375 carries the phosphothreonine modification.

Belongs to the NDRG family. In terms of assembly, interacts with RAB4A (membrane-bound form); the interaction involves NDRG1 in vesicular recycling of CDH1. Interacts with APOA1, APOA2, PRA1 and RTN1. In terms of processing, under stress conditions, phosphorylated in the C-terminal on many serine and threonine residues. Phosphorylated in vitro by PKA. Phosphorylation enhanced by increased intracellular cAMP levels. Homocysteine induces dephosphorylation. Phosphorylation by SGK1 is cell cycle dependent. As to expression, widely expressed, with highest levels in kidney followed by brain, pancreas, small intestine, colon and spleen (at protein level). Also detected in heart and preputial gland, and in much smaller quantities in other tissues. Not detected in duodenum and prostate. Highly expressed in Schwann cells.

Its subcellular location is the cytoplasm. The protein resides in the cytosol. It is found in the cytoskeleton. The protein localises to the microtubule organizing center. It localises to the centrosome. Its subcellular location is the nucleus. The protein resides in the cell membrane. Its function is as follows. Stress-responsive protein involved in hormone responses, cell growth, and differentiation. Acts as a tumor suppressor in many cell types. Necessary but not sufficient for p53/TP53-mediated caspase activation and apoptosis. Required for vesicular recycling of CDH1 and TF. May also function in lipid trafficking. Protects cells from spindle disruption damage. Functions in p53/TP53-dependent mitotic spindle checkpoint. Regulates microtubule dynamics and maintains euploidy. Has a role in cell trafficking notably of the Schwann cell and is necessary for the maintenance and development of the peripheral nerve myelin sheath. The sequence is that of Protein NDRG1 (Ndrg1) from Mus musculus (Mouse).